The following is a 221-amino-acid chain: Adenylate kinase (221 aa).

An ATP-binding site is contributed by 10–15 (GAGKGT). Residues 30 to 59 (STGDMLRAAVKARTELGVAAKKIMDAGGLV) are NMP. Residues Thr-31, Arg-36, 57-59 (GLV), 85-88 (GFPR), and Gln-92 each bind AMP. Positions 122 to 159 (GRRVHLASGRTYHIKFNPPKVEGKDDITGDPLIQRDDD) are LID. ATP-binding positions include Arg-123 and 132–133 (TY). The AMP site is built by Arg-156 and Arg-167. ATP is bound at residue Ser-207.

It belongs to the adenylate kinase family. Monomer.

The protein resides in the cytoplasm. It catalyses the reaction AMP + ATP = 2 ADP. It participates in purine metabolism; AMP biosynthesis via salvage pathway; AMP from ADP: step 1/1. In terms of biological role, catalyzes the reversible transfer of the terminal phosphate group between ATP and AMP. Plays an important role in cellular energy homeostasis and in adenine nucleotide metabolism. The polypeptide is Adenylate kinase (Polynucleobacter necessarius subsp. necessarius (strain STIR1)).